The following is a 300-amino-acid chain: MIDTKVNIAGVEFKNPVIAASGTFGFGREFLEYFPISKLGGLATKGLTLREREGNKGVRIHETIGGIMNSIGLQNPGIDAFIEEELPFLNSQDTVIIANVSGNTIDEYVISVEKLNQTDIDMIELNISCPNVKEGGISFGTKAEIASNVVTQVRKVCQKPLIVKLSPSAENIVEMAESCVEAGADALSLVNTFPALAIDISKKKAIFDNITAGLSGPCIKPIALRMVYEVSKAVDVPIIGIGGIMDYRDAIEYIMAGAWAVQVGTANFINPNACAEIIEGIEEYLQKEGISTLEEIRGII.

Residues S21 and 45–46 each bind FMN; that span reads KG. Substrate is bound by residues K45 and 69 to 73; that span reads NSIGL. FMN contacts are provided by N99 and N126. N126 contributes to the substrate binding site. The active-site Nucleophile is the C129. K164 and V190 together coordinate FMN. 191 to 192 is a substrate binding site; sequence NT. Residues G216, 242 to 243, and 264 to 265 contribute to the FMN site; these read GG and GT.

Belongs to the dihydroorotate dehydrogenase family. Type 1 subfamily. Heterotetramer of 2 PyrK and 2 PyrD type B subunits. FMN is required as a cofactor.

Its subcellular location is the cytoplasm. It carries out the reaction (S)-dihydroorotate + NAD(+) = orotate + NADH + H(+). It functions in the pathway pyrimidine metabolism; UMP biosynthesis via de novo pathway; orotate from (S)-dihydroorotate (NAD(+) route): step 1/1. Functionally, catalyzes the conversion of dihydroorotate to orotate with NAD(+) as electron acceptor. The polypeptide is Dihydroorotate dehydrogenase B (NAD(+)), catalytic subunit (pyrD) (Petrotoga mobilis (strain DSM 10674 / SJ95)).